The primary structure comprises 545 residues: Coiled-coil domain-containing protein 60 (545 aa).

Residues 72–99 (NILREENAMKKKQQLLQKLKEEELNKFQ) are a coiled coil. Positions 224–284 (PAIRTAMASR…DNESSSTKPE (61 aa)) are disordered. Positions 238 to 259 (RGSTLSLTRTSGGSSPQSSMMS) are enriched in low complexity.

The chain is Coiled-coil domain-containing protein 60 (Ccdc60) from Mus musculus (Mouse).